Here is a 514-residue protein sequence, read N- to C-terminus: Cytochrome P450 monooxygenase aneD (514 aa).

A helical membrane pass occupies residues 6 to 26 (ICTLLAVIATTSLGLLFLSII). N-linked (GlcNAc...) asparagine glycans are attached at residues Asn113, Asn261, and Asn347. Cys424 contacts heme.

The protein belongs to the cytochrome P450 family. Heme serves as cofactor.

It localises to the membrane. It catalyses the reaction asperaculane D + reduced [NADPH--hemoprotein reductase] + O2 = asperaculane E + oxidized [NADPH--hemoprotein reductase] + H2O + H(+). It participates in secondary metabolite biosynthesis. Cytochrome P450 monooxygenase; part of the gene cluster that mediates the biosynthesis of aculenes, a unique type of norsesquiterpenes that contain a nordaucane skeleton linked to an L-proline moiety and are of mixed biosynthetic origin. The pathway begins with the synthesis of dauca-4,7-diene by the terpene cyclase aneC using farnesyl pyrophosphate (FPP) as substrate. The cytochrome P450 monooxygenase aneF then performs the initial oxidation at C-12 of dauca-4,7-diene to yield asperaculane D. Asperaculane D is substrate of the cytochrome P450 monooxygenase aneD for C-10 hydroxylation to yield asperaculane E. The cytochrome P450 monooxygenase aneG then converts asperaculane E into aculene D via C-2 oxidation. The monomodular nonribosomal peptide synthtase aneB adenylates L-proline and the thiohydrolase aneE transfers this activated L-proline derivative to aculenes D and C to produce respectively aculenes B and A. The dioxygenase aneA converts aculene D into aculene C, and aculene B into aculene A by introducing the 5,6-alkene moiety. Asperculanes A, B, C and F, as well as 14-prolyl asperculane C, might be shunt products of the pathway. The sequence is that of Cytochrome P450 monooxygenase aneD from Aspergillus aculeatus (strain ATCC 16872 / CBS 172.66 / WB 5094).